Here is a 295-residue protein sequence, read N- to C-terminus: Urease accessory protein UreD (295 aa).

It belongs to the UreD family. As to quaternary structure, ureD, UreF and UreG form a complex that acts as a GTP-hydrolysis-dependent molecular chaperone, activating the urease apoprotein by helping to assemble the nickel containing metallocenter of UreC. The UreE protein probably delivers the nickel.

The protein localises to the cytoplasm. Required for maturation of urease via the functional incorporation of the urease nickel metallocenter. The chain is Urease accessory protein UreD from Ralstonia nicotianae (strain ATCC BAA-1114 / GMI1000) (Ralstonia solanacearum).